Consider the following 121-residue polypeptide: Large ribosomal subunit protein uL22 (121 aa).

Belongs to the universal ribosomal protein uL22 family. As to quaternary structure, part of the 50S ribosomal subunit.

In terms of biological role, this protein binds specifically to 23S rRNA; its binding is stimulated by other ribosomal proteins, e.g. L4, L17, and L20. It is important during the early stages of 50S assembly. It makes multiple contacts with different domains of the 23S rRNA in the assembled 50S subunit and ribosome. Functionally, the globular domain of the protein is located near the polypeptide exit tunnel on the outside of the subunit, while an extended beta-hairpin is found that lines the wall of the exit tunnel in the center of the 70S ribosome. This chain is Large ribosomal subunit protein uL22, found in Synechococcus sp. (strain CC9605).